The primary structure comprises 487 residues: N-succinylglutamate 5-semialdehyde dehydrogenase (487 aa).

221-226 (GSSRTG) contributes to the NAD(+) binding site. Catalysis depends on residues Glu244 and Cys278.

This sequence belongs to the aldehyde dehydrogenase family. AstD subfamily.

It carries out the reaction N-succinyl-L-glutamate 5-semialdehyde + NAD(+) + H2O = N-succinyl-L-glutamate + NADH + 2 H(+). It functions in the pathway amino-acid degradation; L-arginine degradation via AST pathway; L-glutamate and succinate from L-arginine: step 4/5. In terms of biological role, catalyzes the NAD-dependent reduction of succinylglutamate semialdehyde into succinylglutamate. This chain is N-succinylglutamate 5-semialdehyde dehydrogenase, found in Pseudomonas putida (strain W619).